The chain runs to 327 residues: Malate dehydrogenase (327 aa).

12–18 (GAAGQIA) is an NAD(+) binding site. Positions 93 and 99 each coordinate substrate. Residues asparagine 106, glutamine 113, and 130-132 (VGN) each bind NAD(+). The substrate site is built by asparagine 132 and arginine 163. Histidine 188 functions as the Proton acceptor in the catalytic mechanism.

Belongs to the LDH/MDH superfamily. MDH type 2 family.

The enzyme catalyses (S)-malate + NAD(+) = oxaloacetate + NADH + H(+). Its function is as follows. Catalyzes the reversible oxidation of malate to oxaloacetate. This chain is Malate dehydrogenase, found in Acidiphilium cryptum (strain JF-5).